The sequence spans 206 residues: MGGKWSKSSVIGWPTVRERMRRAEPAADRVGAASRDLEKHGAITSSNTAATNAACAWLEAQEEEEVGFPVTPQVPLRPMTYKAAVDLSHFLKEKGGLEGLIHSQRRQDILDLWIYHTQGYFPDWQNYTPGPGVRYPLTFGWCYKLVPVEPDKIEEANKGENTSLLHPVSLHGMDDPEREVLEWRFDSRLAFHHVARELHPEYFKNC.

Residue Gly2 is the site of N-myristoyl glycine; by host attachment. Ser6 is subject to Phosphoserine; by host. An acidic; interacts with host PACS1 and PACS2; stabilizes the interaction of NEF/MHC-I with host AP1M1; necessary for MHC-I internalization region spans residues 62–65 (EEEE). The interval 69-78 (PVTPQVPLRP) is SH3-binding; interaction with Src family tyrosine kinases. A PxxP; stabilizes the interaction of NEF/MHC-I with host AP1M1; necessary for MHC-I internalization motif is present at residues 72 to 75 (PQVP). The segment at 108 to 124 (DILDLWIYHTQGYFPDW) is mediates dimerization, Nef-PTE1 interaction. Residues 148 to 180 (VEPDKIEEANKGENTSLLHPVSLHGMDDPEREV) are binding to ATP6V1H. The short motif at 164–165 (LL) is the Dileucine internalization motif; necessary for CD4 internalization element. The short motif at 174-175 (DD) is the Diacidic; necessary for CD4 internalization element.

The protein belongs to the lentivirus primate group Nef protein family. In terms of assembly, monomer; cytosolic form. Homodimer; membrane bound form. Interacts with Nef associated p21-activated kinase (PAK2); this interaction activates PAK2. Associates with the Nef-MHC-I-AP1 complex; this complex is required for MHC-I internalization. Interacts (via C-terminus) with host PI3-kinase. Interacts with host PACS1; this interaction seems to be weak. Interacts with host PACS2. Interacts with host LCK and MAPK3; these interactions inhibit the kinase activity of the latter. Interacts with host ATP6V1H; this interaction may play a role in CD4 endocytosis. Associates with the CD4-Nef-AP2 complex; this complex is required for CD4 internalization. Interacts with host AP2 subunit alpha and AP2 subunit sigma2. Interacts with TCR-zeta chain; this interaction up-regulates the Fas ligand (FasL) surface expression. Interacts with host HCK, LYN, and SRC; these interactions activate the Src family kinases. Interacts with MAP3K5; this interaction inhibits the Fas and TNFR-mediated death signals. Interacts with beta-COP and PTE1. Interacts with human RACK1; this increases Nef phosphorylation by PKC. Interacts with TP53; this interaction decreases the half-life of TP53, protecting the infected cell against p53-mediated apoptosis. Phosphorylated on serine residues, probably by host PKCdelta and theta. Post-translationally, myristoylated. In terms of processing, the virion-associated Nef proteins are cleaved by the viral protease to release the soluble C-terminal core protein. Nef is probably cleaved concomitantly with viral structural proteins on maturation of virus particles.

It is found in the host cell membrane. The protein resides in the virion. It localises to the secreted. The protein localises to the host Golgi apparatus membrane. Functionally, factor of infectivity and pathogenicity, required for optimal virus replication. Alters numerous pathways of T-lymphocyte function and down-regulates immunity surface molecules in order to evade host defense and increase viral infectivity. Alters the functionality of other immunity cells, like dendritic cells, monocytes/macrophages and NK cells. Its function is as follows. In infected CD4(+) T-lymphocytes, down-regulates the surface MHC-I, mature MHC-II, CD4, CD28, CCR5 and CXCR4 molecules. Mediates internalization and degradation of host CD4 through the interaction of with the cytoplasmic tail of CD4, the recruitment of AP-2 (clathrin adapter protein complex 2), internalization through clathrin coated pits, and subsequent transport to endosomes and lysosomes for degradation. Diverts host MHC-I molecules to the trans-Golgi network-associated endosomal compartments by an endocytic pathway to finally target them for degradation. MHC-I down-regulation may involve AP-1 (clathrin adapter protein complex 1) or possibly Src family kinase-ZAP70/Syk-PI3K cascade recruited by PACS2. In consequence infected cells are masked for immune recognition by cytotoxic T-lymphocytes. Decreasing the number of immune receptors also prevents reinfection by more HIV particles (superinfection). Down-regulates host SERINC3 and SERINC5 thereby excluding these proteins from the viral particles. Virion infectivity is drastically higher when SERINC3 or SERINC5 are excluded from the viral envelope, because these host antiviral proteins impair the membrane fusion event necessary for subsequent virion penetration. Bypasses host T-cell signaling by inducing a transcriptional program nearly identical to that of anti-CD3 cell activation. Interaction with TCR-zeta chain up-regulates the Fas ligand (FasL). Increasing surface FasL molecules and decreasing surface MHC-I molecules on infected CD4(+) cells send attacking cytotoxic CD8+ T-lymphocytes into apoptosis. In terms of biological role, plays a role in optimizing the host cell environment for viral replication without causing cell death by apoptosis. Protects the infected cells from apoptosis in order to keep them alive until the next virus generation is ready to strike. Inhibits the Fas and TNFR-mediated death signals by blocking MAP3K5/ASK1. Decreases the half-life of TP53, protecting the infected cell against p53-mediated apoptosis. Inhibits the apoptotic signals regulated by the Bcl-2 family proteins through the formation of a Nef/PI3-kinase/PAK2 complex that leads to activation of PAK2 and induces phosphorylation of Bad. Functionally, extracellular Nef protein targets CD4(+) T-lymphocytes for apoptosis by interacting with CXCR4 surface receptors. The chain is Protein Nef from Human immunodeficiency virus type 1 group M subtype B (isolate HXB2) (HIV-1).